A 309-amino-acid polypeptide reads, in one-letter code: Homoserine kinase (309 aa).

91 to 101 (PIGSGLGSSAC) is an ATP binding site.

This sequence belongs to the GHMP kinase family. Homoserine kinase subfamily.

It is found in the cytoplasm. The enzyme catalyses L-homoserine + ATP = O-phospho-L-homoserine + ADP + H(+). It functions in the pathway amino-acid biosynthesis; L-threonine biosynthesis; L-threonine from L-aspartate: step 4/5. Catalyzes the ATP-dependent phosphorylation of L-homoserine to L-homoserine phosphate. This Serratia marcescens protein is Homoserine kinase (thrB).